The following is a 524-amino-acid chain: Apoptosis inhibitor 5-A (524 aa).

Residues 1-360 form an ARM-like and Heat-like helical repeats region; that stretch reads MATVEELYRS…HQLGRKLPDF (360 aa). Residues 440–524 are disordered; sequence TLSWKPVQRT…RGNRSRGRIY (85 aa). Residues 455 to 476 carry the Nuclear localization signal motif; it reads KRTSDETSSTSPPKKPIVGPKR. A compositionally biased stretch (gly residues) spans 503-516; that stretch reads GFQGGRGRGWGGRG.

This sequence belongs to the API5 family. In terms of assembly, monomer.

It is found in the nucleus. Functionally, may be an antiapoptotic factor. The protein is Apoptosis inhibitor 5-A (api5-a) of Xenopus laevis (African clawed frog).